A 398-amino-acid polypeptide reads, in one-letter code: MKTLVGFYILCFLIGQDLPFLAADDVNVINDSTQNLCFANRLSDFLPPPYSNISDNMPCTPLWNTFVLRYSENRDNVMTIIVSALYTTGWVGIGFSKEGRMVGSSAMIGWISKKGHAKIKQYYLQGTERDQVVPDQGELQLQKVPPVVALHGAMIYLAFQVKFAVRVPRRAVILAFSTAYPSKLGRLTKHDDKTTVIVDFSKASGATSIKTTTSTEKTKHGVMAILGWGFLLPVGAILARYLRHKDPLWYYLHIGFQFTGFIFGLAAVILGIQLYNRIQPDIPAHRGIGIFLLVLSTLQVLAFFARPQKETKMRRYWNWYHHWIGRISLFFGAVNIVLGIRMADNGGDGWKIGYGFVLSVTLLAFVVLEIFRIRGTIGSPSSRSPPSFETHPSSSTSV.

The signal sequence occupies residues 1–23 (MKTLVGFYILCFLIGQDLPFLAA). One can recognise a DOMON domain in the interval 64 to 177 (NTFVLRYSEN…PRRAVILAFS (114 aa)). A Cytochrome b561 domain is found at 184–377 (LGRLTKHDDK…LEIFRIRGTI (194 aa)). His-220 serves as a coordination point for heme b. The next 2 membrane-spanning stretches (helical) occupy residues 222–242 (VMAI…ARYL) and 252–272 (LHIG…ILGI). His-253 and His-285 together coordinate heme b. Helical transmembrane passes span 287–307 (GIGI…FARP), 320–340 (YHHW…VLGI), and 351–371 (KIGY…LEIF). His-321 is a binding site for heme b.

It depends on heme b as a cofactor.

It localises to the membrane. In terms of biological role, may act as a catecholamine-responsive trans-membrane electron transporter. The chain is Cytochrome b561 and DOMON domain-containing protein At3g61750 from Arabidopsis thaliana (Mouse-ear cress).